The primary structure comprises 420 residues: UDP-N-acetylglucosamine 1-carboxyvinyltransferase (420 aa).

22-23 (KN) serves as a coordination point for phosphoenolpyruvate. A UDP-N-acetyl-alpha-D-glucosamine-binding site is contributed by Arg93. The active-site Proton donor is Cys117. The residue at position 117 (Cys117) is a 2-(S-cysteinyl)pyruvic acid O-phosphothioketal. UDP-N-acetyl-alpha-D-glucosamine is bound by residues 162-165 (KVSV), Asp307, and Ile329.

The protein belongs to the EPSP synthase family. MurA subfamily.

It localises to the cytoplasm. It catalyses the reaction phosphoenolpyruvate + UDP-N-acetyl-alpha-D-glucosamine = UDP-N-acetyl-3-O-(1-carboxyvinyl)-alpha-D-glucosamine + phosphate. Its pathway is cell wall biogenesis; peptidoglycan biosynthesis. Its function is as follows. Cell wall formation. Adds enolpyruvyl to UDP-N-acetylglucosamine. The polypeptide is UDP-N-acetylglucosamine 1-carboxyvinyltransferase (Actinobacillus succinogenes (strain ATCC 55618 / DSM 22257 / CCUG 43843 / 130Z)).